A 565-amino-acid polypeptide reads, in one-letter code: Arginine--tRNA ligase (565 aa).

Positions Ala-128–His-138 match the 'HIGH' region motif.

Belongs to the class-I aminoacyl-tRNA synthetase family. As to quaternary structure, monomer.

The protein localises to the cytoplasm. The catalysed reaction is tRNA(Arg) + L-arginine + ATP = L-arginyl-tRNA(Arg) + AMP + diphosphate. This is Arginine--tRNA ligase from Delftia acidovorans (strain DSM 14801 / SPH-1).